The following is a 429-amino-acid chain: Serine--tRNA ligase (429 aa).

229–231 (TAE) contributes to the L-serine binding site. 260–262 (RSE) contributes to the ATP binding site. Glu283 contributes to the L-serine binding site. Position 347–350 (347–350 (EISS)) interacts with ATP. Residue Ser383 participates in L-serine binding.

This sequence belongs to the class-II aminoacyl-tRNA synthetase family. Type-1 seryl-tRNA synthetase subfamily. As to quaternary structure, homodimer. The tRNA molecule binds across the dimer.

It localises to the cytoplasm. The enzyme catalyses tRNA(Ser) + L-serine + ATP = L-seryl-tRNA(Ser) + AMP + diphosphate + H(+). The catalysed reaction is tRNA(Sec) + L-serine + ATP = L-seryl-tRNA(Sec) + AMP + diphosphate + H(+). Its pathway is aminoacyl-tRNA biosynthesis; selenocysteinyl-tRNA(Sec) biosynthesis; L-seryl-tRNA(Sec) from L-serine and tRNA(Sec): step 1/1. In terms of biological role, catalyzes the attachment of serine to tRNA(Ser). Is also able to aminoacylate tRNA(Sec) with serine, to form the misacylated tRNA L-seryl-tRNA(Sec), which will be further converted into selenocysteinyl-tRNA(Sec). The chain is Serine--tRNA ligase from Orientia tsutsugamushi (strain Ikeda) (Rickettsia tsutsugamushi).